The primary structure comprises 23 residues: Apolipophorin-3 (23 aa).

The protein belongs to the insect apolipophorin-3 family. Equilibrium between a soluble monomer and a bound lipoprotein form. Apolipophorin-3 associates with lipophorin during lipid loading until each particle contains 9 or 14 molecules of apolipophorin-3. In terms of tissue distribution, hemolymph.

The protein resides in the secreted. Functionally, assists in the loading of diacylglycerol, generated from triacylglycerol stores in the fat body through the action of adipokinetic hormone, into lipophorin, the hemolymph lipoprotein. It increases the lipid carrying capacity of lipophorin by covering the expanding hydrophobic surface resulting from diacylglycerol uptake. It thus plays a critical role in the transport of lipids during flight in several species of insects. The sequence is that of Apolipophorin-3 from Melanoplus sanguinipes (Migratory grasshopper).